Here is a 347-residue protein sequence, read N- to C-terminus: Large ribosomal subunit protein uL10 (347 aa).

Positions 310–347 are disordered; that stretch reads ATVAAPAAEEEKKEEEPEEEEEDHAEEDGMAGLGALFG. Residues 325 to 338 are compositionally biased toward acidic residues; it reads EPEEEEEDHAEEDG.

This sequence belongs to the universal ribosomal protein uL10 family. As to quaternary structure, part of the 50S ribosomal subunit. Forms part of the ribosomal stalk which helps the ribosome interact with GTP-bound translation factors. Forms a heptameric L10(L12)2(L12)2(L12)2 complex, where L10 forms an elongated spine to which the L12 dimers bind in a sequential fashion.

Its function is as follows. Forms part of the ribosomal stalk, playing a central role in the interaction of the ribosome with GTP-bound translation factors. This chain is Large ribosomal subunit protein uL10, found in Methanosarcina mazei (strain ATCC BAA-159 / DSM 3647 / Goe1 / Go1 / JCM 11833 / OCM 88) (Methanosarcina frisia).